A 441-amino-acid polypeptide reads, in one-letter code: MSASNYATERETAEGKVFTVTGGDWDVVVSGTDPINDERIVVNMGPQHPSTHGVLRLVLELEGETVREARSVVGYLHTGIEKNLEFRNWVQGSTFVTRMDYLAPLFNETAYALAVEKLLGIEEQITERATTIRVLMMELNRISSHLVWVATTAMELGAINMMLYGFREREYILEIFELITGLRMNHAYVRPGGVAQDVPDEAIAKIRDFLKLMPKKLEEYEKMLSGQPIWLERTQNVGVLDATGCLALGVTGPVLRSAGLAWDLRKTMPYCGYETYEFDVPTHTDGDVWGRYLVRLAEIRESLKLVEQAVDRLRPGPVMVADRKIAWPAQLAIGVDGMGNSLEHVAKIMGQSMESLIHHFKLVTEGFRVPPGQVYVALEAPRGELGVHAVSDGGTRPYRVHYREPSFVNLQALPAMAEGGLIADVIAGGASLDPVMGGCDR.

This sequence belongs to the complex I 49 kDa subunit family. NDH-1 is composed of 14 different subunits. Subunits NuoB, C, D, E, F, and G constitute the peripheral sector of the complex.

Its subcellular location is the cell membrane. The catalysed reaction is a quinone + NADH + 5 H(+)(in) = a quinol + NAD(+) + 4 H(+)(out). Functionally, NDH-1 shuttles electrons from NADH, via FMN and iron-sulfur (Fe-S) centers, to quinones in the respiratory chain. The immediate electron acceptor for the enzyme in this species is believed to be a menaquinone. Couples the redox reaction to proton translocation (for every two electrons transferred, four hydrogen ions are translocated across the cytoplasmic membrane), and thus conserves the redox energy in a proton gradient. The polypeptide is NADH-quinone oxidoreductase subunit D 1 (Salinispora arenicola (strain CNS-205)).